A 483-amino-acid chain; its full sequence is MPEDSTAIDYVMEKASGPHFSGLRLDGLLSSPSKSSVSSPSHFRLSNSSFSATDDPAAPHQPFVIGVTGGTASGKTTVCDMIIQQLHDHRIVLVNQDSFYRGLTSEELEHVQEYNFDHPDAFDTEQLLHCVDILKSGQPYQIPIYDFKTHQRKVDAFRQVNACDVIILEGILVFHDSRVRDLMNMKIFVDTDADVRLARRIRRDTVERGRDVDSVLEQYAKFVKPAFDDFVLPSKKYADVIIPRGGDNHVAVDLIVQHIHTKLGQHDLCKIYPNVFVIETTFQIRGMHTLIREKDISKHDFVFYSDRLIRLVVEHGLGHLPFTEKQVVTPTGSVYSGVDFCKKLCGVSVIRSGESMENALRACCKGIKIGKILIHRDGDNGMQLIYEKLPSDISERHVLLLDPVLGTGNSANQAIELLIQKGVPEAHIIFLNLISAPEGIHCVCKRFPKLKIVTSEIDQCLNEEFRVIPGLGEFGDRYFGTDE.

The transit peptide at 1 to 47 (MPEDSTAIDYVMEKASGPHFSGLRLDGLLSSPSKSSVSSPSHFRLSN) directs the protein to the chloroplast. The tract at residues 59–264 (PHQPFVIGVT…IVQHIHTKLG (206 aa)) is uridine kinase. Residues 274–483 (NVFVIETTFQ…FGDRYFGTDE (210 aa)) are uracil phosphoribosyltransferase. Residues K298, R307, and 341 to 344 (CKKL) each bind GTP. 5-phospho-alpha-D-ribose 1-diphosphate is bound by residues R351 and R376. Residue R396 participates in GTP binding. 5-phospho-alpha-D-ribose 1-diphosphate contacts are provided by residues D402, 407–410 (TGNS), and E473. 472–474 (GEF) is a binding site for uracil.

It in the N-terminal section; belongs to the uridine kinase family. The protein in the C-terminal section; belongs to the UPRTase family.

It is found in the plastid. Its subcellular location is the chloroplast. The catalysed reaction is cytidine + ATP = CMP + ADP + H(+). It carries out the reaction uridine + ATP = UMP + ADP + H(+). It participates in pyrimidine metabolism; CTP biosynthesis via salvage pathway; CTP from cytidine: step 1/3. It functions in the pathway pyrimidine metabolism; UMP biosynthesis via salvage pathway; UMP from uridine: step 1/1. Involved in the pyrimidine salvage pathway. Phosphorylates uridine to uridine monophosphate (UMP). Phosphorylates cytidine to cytidine monophosphate (CMP). Does not possess uracil phosphoribosyltransferase (UPRTase) activity that catalyzes the conversion of uracil and 5-phospho-alpha-D-ribose 1-diphosphate (PRPP) to UMP and diphosphate. This Arabidopsis thaliana (Mouse-ear cress) protein is Uridine/cytidine kinase UKL1, chloroplastic.